Here is a 252-residue protein sequence, read N- to C-terminus: Clc-like protein 2 (252 aa).

4 consecutive transmembrane segments (helical) span residues 7–29 (YAILVLTIIAFLLTAAALCTPAW), 91–111 (LFHIYLISQAFAMLSLISFCV), 127–147 (VFLVLAAVIAFGCLIAFAVYS), and 173–193 (IALTGAFVYLVAIILSVVHVL).

Belongs to the Clc family.

The protein resides in the membrane. The chain is Clc-like protein 2 (clc-2) from Caenorhabditis elegans.